Here is a 183-residue protein sequence, read N- to C-terminus: UPF0302 protein BH3876 (183 aa).

Belongs to the UPF0302 family.

The polypeptide is UPF0302 protein BH3876 (Halalkalibacterium halodurans (strain ATCC BAA-125 / DSM 18197 / FERM 7344 / JCM 9153 / C-125) (Bacillus halodurans)).